An 82-amino-acid chain; its full sequence is MVKIRLSRFGSTHNPHYRIVVTDARRPRDGGYIENLGHYDPRKTTETYLKVNTERAAYWLAQGAQPTQTARRLLKAQGVKVA.

The protein belongs to the bacterial ribosomal protein bS16 family.

In Deinococcus deserti (strain DSM 17065 / CIP 109153 / LMG 22923 / VCD115), this protein is Small ribosomal subunit protein bS16.